We begin with the raw amino-acid sequence, 342 residues long: Anthranilate phosphoribosyltransferase (342 aa).

Residues G84, 87–88 (GD), T92, 94–97 (NITT), 112–120 (KHGNRSVSS), and S124 contribute to the 5-phospho-alpha-D-ribose 1-diphosphate site. Residue G84 coordinates anthranilate. T96 is a Mg(2+) binding site. N115 is a binding site for anthranilate. R170 provides a ligand contact to anthranilate. 2 residues coordinate Mg(2+): D228 and E229.

The protein belongs to the anthranilate phosphoribosyltransferase family. Homodimer. Requires Mg(2+) as cofactor.

The catalysed reaction is N-(5-phospho-beta-D-ribosyl)anthranilate + diphosphate = 5-phospho-alpha-D-ribose 1-diphosphate + anthranilate. It functions in the pathway amino-acid biosynthesis; L-tryptophan biosynthesis; L-tryptophan from chorismate: step 2/5. Its function is as follows. Catalyzes the transfer of the phosphoribosyl group of 5-phosphorylribose-1-pyrophosphate (PRPP) to anthranilate to yield N-(5'-phosphoribosyl)-anthranilate (PRA). In Corynebacterium efficiens (strain DSM 44549 / YS-314 / AJ 12310 / JCM 11189 / NBRC 100395), this protein is Anthranilate phosphoribosyltransferase.